Here is a 134-residue protein sequence, read N- to C-terminus: UPF0412 protein YaaI (134 aa).

The signal sequence occupies residues 1 to 23 (MKSVFTLSASLAISLMLCCTAQA).

Belongs to the UPF0412 family.

The protein is UPF0412 protein YaaI of Escherichia coli O17:K52:H18 (strain UMN026 / ExPEC).